The chain runs to 290 residues: Pyridoxal kinase PdxY (290 aa).

Substrate-binding positions include Ser12 and Thr47–Gln48. Residues Asp114, Glu151, Lys184, and Arg211–Leu214 contribute to the ATP site. A substrate-binding site is contributed by Asp225.

This sequence belongs to the pyridoxine kinase family. PdxY subfamily. In terms of assembly, homodimer. It depends on Mg(2+) as a cofactor.

The catalysed reaction is pyridoxal + ATP = pyridoxal 5'-phosphate + ADP + H(+). It functions in the pathway cofactor metabolism; pyridoxal 5'-phosphate salvage; pyridoxal 5'-phosphate from pyridoxal: step 1/1. Functionally, pyridoxal kinase involved in the salvage pathway of pyridoxal 5'-phosphate (PLP). Catalyzes the phosphorylation of pyridoxal to PLP. This is Pyridoxal kinase PdxY from Pseudomonas fluorescens (strain SBW25).